The following is a 224-amino-acid chain: EEF1A lysine methyltransferase 3 (224 aa).

S-adenosyl-L-methionine contacts are provided by residues Trp-58, 84–86 (GAG), Asp-105, Trp-134, and Ala-151.

This sequence belongs to the methyltransferase superfamily. METTL21 family.

It is found in the cytoplasm. It localises to the cytoskeleton. The protein resides in the microtubule organizing center. Its subcellular location is the centrosome. The enzyme catalyses L-lysyl-[protein] + 3 S-adenosyl-L-methionine = N(6),N(6),N(6)-trimethyl-L-lysyl-[protein] + 3 S-adenosyl-L-homocysteine + 3 H(+). It catalyses the reaction L-lysyl-[protein] + S-adenosyl-L-methionine = N(6)-methyl-L-lysyl-[protein] + S-adenosyl-L-homocysteine + H(+). The catalysed reaction is N(6)-methyl-L-lysyl-[protein] + S-adenosyl-L-methionine = N(6),N(6)-dimethyl-L-lysyl-[protein] + S-adenosyl-L-homocysteine + H(+). It carries out the reaction N(6),N(6)-dimethyl-L-lysyl-[protein] + S-adenosyl-L-methionine = N(6),N(6),N(6)-trimethyl-L-lysyl-[protein] + S-adenosyl-L-homocysteine + H(+). Functionally, protein-lysine methyltransferase that selectively mono-, di- and trimethylates 'Lys-165' of the translation elongation factors EEF1A1 and EEF1A2 in an aminoacyl-tRNA and GTP-dependent manner. EEF1A1 methylation by EEF1AKMT3 is dynamic as well as inducible by stress conditions, such as ER-stress, and plays a regulatory role on mRNA translation. The sequence is that of EEF1A lysine methyltransferase 3 from Xenopus tropicalis (Western clawed frog).